We begin with the raw amino-acid sequence, 1025 residues long: Protein mono-ADP-ribosyltransferase PARP10 (1025 aa).

Thr101 is modified (phosphothreonine). The residue at position 106 (Glu106) is an ADP-ribosyl glutamic acid. Lys140 is subject to N6-(ADP-ribosyl)lysine. The tract at residues 318–346 is disordered; that stretch reads GIMTTGSGQEPGQSGTSLRTGPMGSLGQA. Over residues 321–336 the composition is skewed to polar residues; it reads TTGSGQEPGQSGTSLR. Residues Ser378, Ser423, and Ser431 each carry the phosphoserine modification. Disordered stretches follow at residues 569–589 and 617–644; these read VLPG…DQED and LEEE…APST. Residues 617 to 639 show a composition bias toward acidic residues; it reads LEEEGPQEQPEEEVTPGHEEEEP. Short sequence motifs (ubiquitin-interacting) lie at residues 650 to 667 and 673 to 690; these read LEEE…LEPQ and QEEA…LLEQ. Position 663 is a phosphoserine (Ser663). A myc binding region spans residues 700–907; that stretch reads DGGTDGKAQL…CAHGFNRSFC (208 aa). The PARP catalytic domain maps to 806–1025; it reads PTLAGQTLKG…SGLPGRSPDT (220 aa). The PIP-box signature appears at 831-838; it reads QEVVRAFY. Glu882 is modified (ADP-ribosyl glutamic acid). Residue Lys916 is modified to N6-(ADP-ribosyl)lysine. Lys916 is modified (N6-acetyllysine). The tract at residues 1006–1025 is disordered; sequence HVPRASPDDPSGLPGRSPDT. Ser1011 is modified (phosphoserine).

This sequence belongs to the ARTD/PARP family. Interacts with MYC. Interacts with PARP14. Interacts (via-PIP box and ubiquitin-interacting motifs) with PCNA. Stimulated through its phosphorylation by CDK2. Acquires CDK-dependent phosphorylation through late-G1 to S phase, and from prometaphase to cytokinesis in the nucleolar organizing regions. Phosphorylation is suppressed in growth-arrested cells. Post-translationally, auto-mono-ADP-ribosylated on glutamate and lysine residues. Highly expressed in spleen and thymus. Intermediate levels in liver, kidney, pancreas, prostate, testis, ovary, intestine, and leukocytes. Low expression in heart, brain, placenta, lung, skeletal muscle, and colon.

It localises to the nucleus. The protein localises to the nucleolus. The protein resides in the cytoplasm. It carries out the reaction L-lysyl-[protein] + NAD(+) = N(6)-(ADP-D-ribosyl)-L-lysyl-[protein] + nicotinamide + H(+). The enzyme catalyses L-aspartyl-[protein] + NAD(+) = 4-O-(ADP-D-ribosyl)-L-aspartyl-[protein] + nicotinamide. It catalyses the reaction L-glutamyl-[protein] + NAD(+) = 5-O-(ADP-D-ribosyl)-L-glutamyl-[protein] + nicotinamide. Its function is as follows. ADP-ribosyltransferase that mediates mono-ADP-ribosylation of glutamate and aspartate residues on target proteins. In contrast to PARP1 and PARP2, it is not able to mediate poly-ADP-ribosylation. Catalyzes mono-ADP-ribosylation of GSK3B, leading to negatively regulate GSK3B kinase activity. Involved in translesion DNA synthesis in response to DNA damage via its interaction with PCNA. This Homo sapiens (Human) protein is Protein mono-ADP-ribosyltransferase PARP10.